The sequence spans 228 residues: UPF0173 metal-dependent hydrolase Lm4b_01588 (228 aa).

Belongs to the UPF0173 family.

The polypeptide is UPF0173 metal-dependent hydrolase Lm4b_01588 (Listeria monocytogenes serotype 4b (strain CLIP80459)).